The primary structure comprises 770 residues: Amyloid-beta precursor protein (770 aa).

The signal sequence occupies residues 1–17 (MLPSLALLLLTTWTARA). At 18 to 701 (LEVPTDGNAG…AEDVGSNKGA (684 aa)) the chain is on the extracellular side. Residues 28–123 (LLAEPQIAMF…PYRCLVGEFV (96 aa)) form a GFLD subdomain region. The E1 domain occupies 28 to 189 (LLAEPQIAMF…RGVEFVCCPL (162 aa)). 6 disulfides stabilise this stretch: Cys38–Cys62, Cys73–Cys117, Cys98–Cys105, Cys133–Cys187, Cys144–Cys174, and Cys158–Cys186. 96–110 (NWCKRSRKQCKTHPH) lines the heparin pocket. The segment at 131–189 (DKCKFLHQERMDVCETHLHWHTVAKETCSEKSTNLHDYGMLLPCGIDKFRGVEFVCCPL) is cuBD subdomain. Residues 135–155 (FLHQERMDVCETHLHWHTVAK) form a copper-binding region. His147, His151, and Tyr168 together coordinate Cu(2+). Residues 181-188 (GVEFVCCP) are zinc-binding. Positions 183, 186, and 187 each coordinate Zn(2+). The span at 196–207 (IDSADAEEDDSD) shows a compositional bias: acidic residues. Residues 196-281 (IDSADAEEDD…IATTTTTTTE (86 aa)) form a disordered region. Ser198 carries the phosphoserine; by CK2 modification. Ser206 is modified (phosphoserine; by CK1). Residue Tyr217 is modified to Sulfotyrosine. Acidic residues predominate over residues 228–264 (VAEEEEVADVEEEEADDDEDVEDGDEVEEEAEEPYEE). The segment covering 268-281 (KTTSIATTTTTTTE) has biased composition (low complexity). 3 disulfide bridges follow: Cys291-Cys341, Cys300-Cys324, and Cys316-Cys337. A BPTI/Kunitz inhibitor domain is found at 291 to 341 (CSEQAETGPCRSMISRWYFDVTEGKCAPFFYGGCGGNRNNFDTEEYCMAVC). Residue Tyr336 is modified to Sulfotyrosine. Residues 344–365 (VMSQNLLKTSGEPVSQGPVKLP) carry the OX-2 motif. One can recognise an E2 domain in the interval 374 to 565 (AVDKYLETPG…EEIQDEVDEL (192 aa)). The interval 391–423 (FQKAKERLEAKHRERMSQVMREWEEAERQAKNL) is heparin-binding. The residue at position 441 (Ser441) is a Phosphoserine. The interval 491–522 (FNMLKKYVRAEQKDRQHTLKHFEHVRMVDPKK) is heparin-binding. A Phosphotyrosine modification is found at Tyr497. The tract at residues 523–540 (AAQIRSQVMTHLRVIYER) is collagen-binding. Residues Asn542 and Asn571 are each glycosylated (N-linked (GlcNAc...) asparagine). A glycan (O-linked (Xyl...) (chondroitin sulfate) serine) is linked at Ser656. Residues His677, Tyr681, His684, and His685 each coordinate Cu(2+). Residues His677, Tyr681, His684, and His685 each coordinate Zn(2+). The interval 695 to 722 (VGSNKGAIIGLMVGGVVIATVIVITLVM) is interaction with PSEN1. The helical transmembrane segment at 702 to 722 (IIGLMVGGVVIATVIVITLVM) threads the bilayer. Topologically, residues 723–770 (LKKKQYTSIHHGVVEVDAAVTPEERHLSKMQQNGYENPTYKFFEQMQN) are cytoplasmic. Positions 724-734 (KKKQYTSIHHG) match the Basolateral sorting signal motif. Thr729 carries the phosphothreonine modification. Position 730 is a phosphoserine; by APP-kinase I (Ser730). Residues 732-751 (HHGVVEVDAAVTPEERHLSK) form an interaction with G(o)-alpha region. A Phosphothreonine; by CDK5 and MAPK10 modification is found at Thr743. A required for the interaction with KIF5B and for anterograde transport in axons region spans residues 756–770 (GYENPTYKFFEQMQN). Tyr757 carries the post-translational modification Phosphotyrosine; by ABL1. The short motif at 757-762 (YENPTY) is the YENPXY motif; contains endocytosis signal element. Lys763 participates in a covalent cross-link: Glycyl lysine isopeptide (Lys-Gly) (interchain with G-Cter in ubiquitin).

Belongs to the APP family. In terms of assembly, binds, via its C-terminus, to the PID domain of several cytoplasmic proteins, including APBB family members, the APBA family, MAPK8IP1, SHC1 and NUMB and DAB1. Binding to DAB1 inhibits its serine phosphorylation. Interacts (via NPXY motif) with DAB2 (via PID domain); the interaction is impaired by tyrosine phosphorylation of the NPXY motif. Also interacts with GPCR-like protein BPP, APPBP1, IB1, KNS2 (via its TPR domains), APPBP2 (via BaSS) and DDB1. In vitro, it binds MAPT via the MT-binding domains. Associates with microtubules in the presence of ATP and in a kinesin-dependent manner. Interacts, through a C-terminal domain, with GNAO1. Amyloid-beta protein 42 binds CHRNA7 in hippocampal neurons. Amyloid-beta associates with HADH2. Interacts with CPEB1, ANKS1B and AGER. Interacts with ITM2B. Interacts with ITM2C. Interacts with IDE. Can form homodimers; dimerization is enhanced in the presence of Cu(2+) ions. Can form homodimers; this is promoted by heparin binding. Amyloid-beta protein 40 interacts with S100A9. CTF-alpha product of APP interacts with GSAP. Isoform APP695 interacts with SORL1 (via N-terminal ectodomain); this interaction retains APP in the trans-Golgi network and reduces processing into soluble APP-alpha and amyloid-beta peptides. Isoform APP770 interacts with SORL1. The C99 fragment also interacts with SORL1. Interacts with PLD3. Interacts with VDAC1. Interacts with NSG1; could regulate APP processing. Amyloid-beta protein 42 interacts with FPR2. Interacts (via transmembrane region) with PSEN1; the interaction is direct. Interacts with LRRK2. Interacts (via cytoplasmic domain) with KIF5B. Interacts (via C-terminus) with APBB2/FE65L1 (via C-terminus). Interacts (via intracellular domain) with APBB3. In terms of processing, proteolytically processed under normal cellular conditions. Cleavage either by alpha-secretase, beta-secretase or theta-secretase leads to generation and extracellular release of soluble APP peptides, S-APP-alpha and S-APP-beta, and the retention of corresponding membrane-anchored C-terminal fragments, C80, C83 and C99. Subsequent processing of C80 and C83 by gamma-secretase yields P3 peptides. This is the major secretory pathway and is non-amyloidogenic. Alternatively, presenilin/nicastrin-mediated gamma-secretase processing of C99 releases the amyloid-beta proteins, amyloid-beta protein 40 and amyloid-beta protein 42, major components of amyloid plaques, and the cytotoxic C-terminal fragments, gamma-CTF(50), gamma-CTF(57) and gamma-CTF(59). PSEN1 cleavage is more efficient with C83 than with C99 as substrate (in vitro). Amyloid-beta protein 40 and Amyloid-beta protein 42 are cleaved by ACE. Many other minor amyloid-beta peptides, amyloid-beta 1-X peptides, are found in cerebral spinal fluid (CSF) including the amyloid-beta X-15 peptides, produced from the cleavage by alpha-secretase. Proteolytically cleaved by caspases during neuronal apoptosis. Cleavage at Asp-739 by either CASP6, CASP8 or CASP9 results in the production of the neurotoxic C31 peptide and the increased production of amyloid-beta peptides. Post-translationally, N- and O-glycosylated. In terms of processing, phosphorylation in the C-terminal on tyrosine, threonine and serine residues is neuron-specific. Phosphorylation can affect APP processing, neuronal differentiation and interaction with other proteins. Phosphorylated on Thr-743 in neuronal cells by Cdc5 kinase and Mapk10, in dividing cells by Cdc2 kinase in a cell-cycle dependent manner with maximal levels at the G2/M phase and, in vitro, by GSK-3-beta. The Thr-743 phosphorylated form causes a conformational change which reduces binding of Fe65 family members. In dopaminergic (DA) neurons, phosphorylation on Thr-743 by LRKK2 promotes the production and the nuclear translocation of the APP intracellular domain (AICD) which induces DA neuron apoptosis. Phosphorylation on Tyr-757 is required for SHC binding. Phosphorylated in the extracellular domain by casein kinases on both soluble and membrane-bound APP. This phosphorylation is inhibited by heparin. N- and O-glycosylated. O-linkage of chondroitin sulfate to the L-APP isoforms produces the APP proteoglycan core proteins, the appicans. Post-translationally, extracellular binding and reduction of copper, results in a corresponding oxidation of Cys-144 and Cys-158, and the formation of a disulfide bond. In terms of processing, trophic-factor deprivation triggers the cleavage of surface APP by beta-secretase to release sAPP-beta which is further cleaved to release an N-terminal fragment of APP (N-APP). Amyloid-beta peptides are degraded by IDE. Post-translationally, sulfated on tyrosine residues. In terms of tissue distribution, isoform APP695 is the major isoform found in brain. The longer isoforms containing the BPTI domain are predominantly expressed in peripheral organs such as muscle and liver.

The protein localises to the cell membrane. Its subcellular location is the membrane. The protein resides in the perikaryon. It is found in the cell projection. It localises to the growth cone. The protein localises to the clathrin-coated pit. Its subcellular location is the early endosome. The protein resides in the cytoplasmic vesicle. It is found in the endoplasmic reticulum. It localises to the golgi apparatus. The protein localises to the secreted. Its subcellular location is the cell surface. The protein resides in the nucleus. It is found in the cytoplasm. Functionally, functions as a cell surface receptor and performs physiological functions on the surface of neurons relevant to neurite growth, neuronal adhesion and axonogenesis. Interaction between APP molecules on neighboring cells promotes synaptogenesis. Involved in cell mobility and transcription regulation through protein-protein interactions. Can promote transcription activation through binding to APBB1-KAT5 and inhibit Notch signaling through interaction with Numb. Couples to apoptosis-inducing pathways such as those mediated by G(o) and JIP. Inhibits G(o)-alpha ATPase activity. Acts as a kinesin I membrane receptor, mediating the axonal transport of beta-secretase and presenilin 1. By acting as a kinesin I membrane receptor, plays a role in axonal anterograde transport of cargo towards synapses in axons. May be involved in copper homeostasis/oxidative stress through copper ion reduction. In vitro, copper-metallated APP induces neuronal death directly or is potentiated through Cu(2+)-mediated low-density lipoprotein oxidation. Can regulate neurite outgrowth through binding to components of the extracellular matrix such as heparin and collagen I and IV. Induces a AGER-dependent pathway that involves activation of p38 MAPK, resulting in internalization of amyloid-beta peptide and mitochondrial dysfunction in cultured cortical neurons. Provides Cu(2+) ions for GPC1 which are required for release of nitric oxide (NO) and subsequent degradation of the heparan sulfate chains on GPC1. Amyloid-beta peptides are lipophilic metal chelators with metal-reducing activity. Binds transient metals such as copper, zinc and iron. Amyloid-beta peptides bind to lipoproteins and apolipoproteins E and J in the CSF and to HDL particles in plasma, inhibiting metal-catalyzed oxidation of lipoproteins. Also bind GPC1 in lipid rafts. Its function is as follows. Appicans elicit adhesion of neural cells to the extracellular matrix and may regulate neurite outgrowth in the brain. In terms of biological role, the gamma-CTF peptides as well as the caspase-cleaved peptides, including C31, are potent enhancers of neuronal apoptosis. In Cavia porcellus (Guinea pig), this protein is Amyloid-beta precursor protein.